The chain runs to 224 residues: MAWLAIVCLLAATTALCVRMAALAPGVYGPAVCGGRSGGGRGPPRHVMIFLGSGGHTGEMLRLLEVYGAALVAGATVRVGYTDEASAERGRQSAALRAARGVEYVPLLKAREVGAGAGAAVRSTVRAAAQAFSAVRRARRALHTGPHVVVLNGPGTSVVVLFWLRVLDLLSLRRTRVVYVESLARTESLSLSGRLAYPFADEFVVQWPDLAQRYRRARWFGALV.

The Lumenal portion of the chain corresponds to 1–2; it reads MA. The chain crosses the membrane as a helical span at residues 3-23; sequence WLAIVCLLAATTALCVRMAAL. Residues 24–224 are Cytoplasmic-facing; that stretch reads APGVYGPAVC…RRARWFGALV (201 aa).

The protein belongs to the ALG14 family. In terms of assembly, heterodimer with ALG13 to form a functional enzyme.

It localises to the endoplasmic reticulum membrane. The protein localises to the nucleus membrane. Involved in protein N-glycosylation. Essential for the second step of the dolichol-linked oligosaccharide pathway. Anchors the catalytic subunit ALG13 to the ER. This is UDP-N-acetylglucosamine transferase subunit ALG14 (ALG14) from Eremothecium gossypii (strain ATCC 10895 / CBS 109.51 / FGSC 9923 / NRRL Y-1056) (Yeast).